The sequence spans 389 residues: Large envelope protein (389 aa).

Position 1 is an N-acetylmethionine (Met1). A lipid anchor (N-myristoyl glycine; by host) is attached at Gly2. Residues 2-108 are pre-S1; that stretch reads GTNLSVPNPL…PPLRDTHPQA (107 aa). The segment at 2–163 is pre-S; the sequence is GTNLSVPNPL…LSTTGDPVPN (162 aa). Residues 2 to 170 lie on the Virion surface; in external conformation side of the membrane; sequence GTNLSVPNPL…VPNMENIASG (169 aa). The Intravirion; in internal conformation portion of the chain corresponds to 2 to 242; sequence GTNLSVPNPL…PGYRWMCLRR (241 aa). The tract at residues 109-163 is pre-S2; it reads MQWNSTTFHQTLQDPRVRALYFPAGGSSSGTVNPVQNTASSISSILSTTGDPVPN. A helical transmembrane segment spans residues 171 to 191; it reads LLGPLLVLQAGFFSLTKILTI. Residues 192–242 are Intravirion; in external conformation-facing; sequence PLSLDSWWTSLNFLGETPVCLGQNSQSQISSHSPTCCPPICPGYRWMCLRR. The helical transmembrane segment at 243–263 threads the bilayer; that stretch reads FIIFLCILLLCLIFLLVLLDY. Residues 264–337 are Virion surface-facing; it reads QGMLPVCPLI…WASVRFSWLS (74 aa). Asn309 carries N-linked (GlcNAc...) asparagine; by host glycosylation. The chain crosses the membrane as a helical span at residues 338-358; sequence LLVPFVQWFVGLSPTVWLSVI. The Intravirion portion of the chain corresponds to 359–364; that stretch reads WMMWFW. The chain crosses the membrane as a helical span at residues 365–387; sequence GPSLYNILSPFMPLLPIFFCLWV. Topologically, residues 388 to 389 are virion surface; sequence YI.

The protein belongs to the orthohepadnavirus major surface antigen family. In terms of assembly, interacts (via its myristoylated pre-S1 region) with the host SLC10A1/NTCP; this interaction is essential for viral entry. As to quaternary structure, in its internal form (Li-HBsAg), interacts with the capsid protein and with the isoform S. Interacts with host chaperone CANX. Associates with host chaperone CANX through its pre-S2 N glycan; this association may be essential for isoform M proper secretion. In terms of assembly, interacts with isoform L. Interacts with the antigens of satellite virus HDV (HDVAgs); this interaction is required for encapsidation of HDV genomic RNA. Isoform M is N-terminally acetylated by host at a ratio of 90%, and N-glycosylated by host at the pre-S2 region. In terms of processing, myristoylated; this modification is essential for its interaction with the host protein SLC10A1/NTCP.

The protein resides in the virion membrane. In terms of biological role, the large envelope protein exists in two topological conformations, one which is termed 'external' or Le-HBsAg and the other 'internal' or Li-HBsAg. In its external conformation the protein attaches the virus to cell receptors and thereby initiating infection. This interaction determines the species specificity and liver tropism. This attachment induces virion internalization predominantly through caveolin-mediated endocytosis. The large envelope protein also assures fusion between virion membrane and endosomal membrane. In its internal conformation the protein plays a role in virion morphogenesis and mediates the contact with the nucleocapsid like a matrix protein. Functionally, the middle envelope protein plays an important role in the budding of the virion. It is involved in the induction of budding in a nucleocapsid independent way. In this process the majority of envelope proteins bud to form subviral lipoprotein particles of 22 nm of diameter that do not contain a nucleocapsid. The chain is Large envelope protein from Hepatitis B virus genotype B2 (isolate Indonesia/pIDW420/1988) (HBV-B).